A 239-amino-acid polypeptide reads, in one-letter code: Pyridoxine 5'-phosphate synthase (239 aa).

N7 is a binding site for 3-amino-2-oxopropyl phosphate. 9 to 10 (DH) contributes to the 1-deoxy-D-xylulose 5-phosphate binding site. R18 is a binding site for 3-amino-2-oxopropyl phosphate. The active-site Proton acceptor is H43. 1-deoxy-D-xylulose 5-phosphate contacts are provided by R45 and H50. E70 serves as the catalytic Proton acceptor. A 1-deoxy-D-xylulose 5-phosphate-binding site is contributed by T100. H191 acts as the Proton donor in catalysis. Residues G192 and 213–214 (GH) contribute to the 3-amino-2-oxopropyl phosphate site.

This sequence belongs to the PNP synthase family. Homooctamer; tetramer of dimers.

The protein localises to the cytoplasm. It catalyses the reaction 3-amino-2-oxopropyl phosphate + 1-deoxy-D-xylulose 5-phosphate = pyridoxine 5'-phosphate + phosphate + 2 H2O + H(+). It functions in the pathway cofactor biosynthesis; pyridoxine 5'-phosphate biosynthesis; pyridoxine 5'-phosphate from D-erythrose 4-phosphate: step 5/5. Catalyzes the complicated ring closure reaction between the two acyclic compounds 1-deoxy-D-xylulose-5-phosphate (DXP) and 3-amino-2-oxopropyl phosphate (1-amino-acetone-3-phosphate or AAP) to form pyridoxine 5'-phosphate (PNP) and inorganic phosphate. The protein is Pyridoxine 5'-phosphate synthase of Desulforapulum autotrophicum (strain ATCC 43914 / DSM 3382 / VKM B-1955 / HRM2) (Desulfobacterium autotrophicum).